A 288-amino-acid chain; its full sequence is Phosphatidate cytidylyltransferase (288 aa).

Helical transmembrane passes span I10–L30, P52–T72, L89–P109, N118–L138, G152–F172, W192–F212, and I223–T243.

It belongs to the CDS family.

The protein resides in the cell inner membrane. It carries out the reaction a 1,2-diacyl-sn-glycero-3-phosphate + CTP + H(+) = a CDP-1,2-diacyl-sn-glycerol + diphosphate. It participates in phospholipid metabolism; CDP-diacylglycerol biosynthesis; CDP-diacylglycerol from sn-glycerol 3-phosphate: step 3/3. The polypeptide is Phosphatidate cytidylyltransferase (cdsA) (Haemophilus influenzae (strain ATCC 51907 / DSM 11121 / KW20 / Rd)).